The following is a 366-amino-acid chain: Cobalt-precorrin-5B C(1)-methyltransferase (366 aa).

It belongs to the CbiD family.

The enzyme catalyses Co-precorrin-5B + S-adenosyl-L-methionine = Co-precorrin-6A + S-adenosyl-L-homocysteine. Its pathway is cofactor biosynthesis; adenosylcobalamin biosynthesis; cob(II)yrinate a,c-diamide from sirohydrochlorin (anaerobic route): step 6/10. In terms of biological role, catalyzes the methylation of C-1 in cobalt-precorrin-5B to form cobalt-precorrin-6A. The protein is Cobalt-precorrin-5B C(1)-methyltransferase of Thermoanaerobacter sp. (strain X514).